A 739-amino-acid chain; its full sequence is Trehalose phosphorylase (739 aa).

Positions 1–26 (MSTPHHQFESKSSTAIRRRLSSSVSS) are excised as a propeptide. The interval 1 to 28 (MSTPHHQFESKSSTAIRRRLSSSVSSKQ) is disordered.

It belongs to the glycosyltransferase group 1 family. Glycosyltransferase 4 subfamily. Homodimer.

It carries out the reaction alpha,alpha-trehalose + phosphate = alpha-D-glucose + alpha-D-glucose 1-phosphate. Its function is as follows. Reversibly catalyzes the synthesis and degradation of trehalose from glucose and alpha-D-glucose 1-phosphate. The equilibrium lies in the direction of trehalose synthesis. The sequence is that of Trehalose phosphorylase from Pleurotus pulmonarius (Indian oyster mushroom).